The following is a 432-amino-acid chain: D-amino acid dehydrogenase (432 aa).

3–17 contacts FAD; it reads VVILGSGVVGVTSAW.

It belongs to the DadA oxidoreductase family. Requires FAD as cofactor.

The catalysed reaction is a D-alpha-amino acid + A + H2O = a 2-oxocarboxylate + AH2 + NH4(+). The protein operates within amino-acid degradation; D-alanine degradation; NH(3) and pyruvate from D-alanine: step 1/1. In terms of biological role, oxidative deamination of D-amino acids. The polypeptide is D-amino acid dehydrogenase (Salmonella dublin (strain CT_02021853)).